A 562-amino-acid chain; its full sequence is Tissue-type plasminogen activator (562 aa).

The N-terminal stretch at 1–20 (MNAMKRGLCCVLLLCGAVFA) is a signal peptide. The propeptide occupies 21–32 (LPSQEIHARVRR). Residues 33 to 35 (GAR) constitute a propeptide, removed by plasmin. Positions 39-81 (VICRDEKTQMIYQQHQSWLRPVLRSNRVEYCWCNSGRAQCHSV) constitute a Fibronectin type-I domain. 17 disulfides stabilise this stretch: Cys41–Cys71, Cys69–Cys78, Cys86–Cys97, Cys91–Cys108, Cys110–Cys119, Cys127–Cys208, Cys148–Cys190, Cys179–Cys203, Cys215–Cys296, Cys236–Cys278, Cys267–Cys291, Cys299–Cys430, Cys342–Cys358, Cys350–Cys419, Cys444–Cys519, Cys476–Cys492, and Cys509–Cys537. Residues 42 to 52 (RDEKTQMIYQQ) form an important for binding to annexin A2 region. The EGF-like domain occupies 82 to 120 (PVRSCSEPRCFNGGTCQQALYFSDFVCQCPEGFAGKCCE). Thr96 is a glycosylation site (O-linked (Fuc) threonine). Kringle domains are found at residues 126-208 (TCYE…TPAC) and 214-296 (DCYF…VPSC). Asn152 carries an N-linked (GlcNAc...) asparagine glycan. The Peptidase S1 domain occupies 311–561 (IKGGLFADIA…YLDWIHDNMR (251 aa)). Active-site charge relay system residues include His357 and Asp406. N-linked (GlcNAc...) asparagine glycosylation occurs at Asn483. The active-site Charge relay system is the Ser513.

Belongs to the peptidase S1 family. In terms of assembly, heterodimer of chain A and chain B held by a disulfide bond. Binds to fibrin with high affinity. This interaction leads to an increase in the catalytic efficiency of the enzyme due to an increase in affinity for plasminogen. Similarly, binding to heparin increases the activation of plasminogen. Binds to annexin A2, cytokeratin-8, fibronectin and laminin. Binds to mannose receptor and the low-density lipoprotein receptor-related protein (LRP1); these proteins are involved in TPA clearance. Binds LRP1B; binding is followed by internalization and degradation. Forms heterodimer with SERPINA5. Interacts with SERPINE1. In complex with SERPINE1, interacts with SORL1. The single chain, almost fully active enzyme, can be further processed into a two-chain fully active form by a cleavage after Arg-310 catalyzed by plasmin, tissue kallikrein or factor Xa.

It is found in the secreted. The protein localises to the extracellular space. It carries out the reaction Specific cleavage of Arg-|-Val bond in plasminogen to form plasmin.. Its activity is regulated as follows. Inhibited by SERPINA5. Inhibited by SERPINE1. In terms of biological role, converts the abundant, but inactive, zymogen plasminogen to plasmin by hydrolyzing a single Arg-Val bond in plasminogen. By controlling plasmin-mediated proteolysis, it plays an important role in tissue remodeling and degradation, in cell migration and many other physiopathological events. During oocyte activation, plays a role in cortical granule reaction in the zona reaction, which contributes to the block to polyspermy. The protein is Tissue-type plasminogen activator (PLAT) of Pongo abelii (Sumatran orangutan).